A 193-amino-acid polypeptide reads, in one-letter code: Segregation and condensation protein B (193 aa).

This sequence belongs to the ScpB family. As to quaternary structure, homodimer. Homodimerization may be required to stabilize the binding of ScpA to the Smc head domains. Component of a cohesin-like complex composed of ScpA, ScpB and the Smc homodimer, in which ScpA and ScpB bind to the head domain of Smc. The presence of the three proteins is required for the association of the complex with DNA.

It localises to the cytoplasm. Its function is as follows. Participates in chromosomal partition during cell division. May act via the formation of a condensin-like complex containing Smc and ScpA that pull DNA away from mid-cell into both cell halves. The chain is Segregation and condensation protein B from Streptococcus thermophilus (strain ATCC BAA-250 / LMG 18311).